The sequence spans 275 residues: Membrane protein insertase YidC (275 aa).

Positions 1–22 (MKKYKRLLLMAGLVTLVFVLSA) are cleaved as a signal peptide. A lipid anchor (N-palmitoyl cysteine) is attached at Cys-23. The S-diacylglycerol cysteine moiety is linked to residue Cys-23. 4 helical membrane passes run 53–73 (LGGS…IILL), 127–147 (YIGC…YQAI), 169–189 (YLIL…LSSM), and 206–226 (PAMI…YWVV). A compositionally biased stretch (basic and acidic residues) spans 249–266 (EEAARQAKARERALERAK). Residues 249-275 (EEAARQAKARERALERAKSPKKKGKKK) form a disordered region.

Belongs to the OXA1/ALB3/YidC family. Type 2 subfamily.

Its subcellular location is the cell membrane. Functionally, required for the insertion and/or proper folding and/or complex formation of integral membrane proteins into the membrane. Involved in integration of membrane proteins that insert both dependently and independently of the Sec translocase complex, as well as at least some lipoproteins. The sequence is that of Membrane protein insertase YidC from Enterococcus faecalis (strain ATCC 700802 / V583).